The following is a 154-amino-acid chain: Deoxyuridine 5'-triphosphate nucleotidohydrolase (154 aa).

Residues 72 to 74 (RSG), Asn85, 89 to 91 (LID), and Met99 each bind substrate.

The protein belongs to the dUTPase family. Mg(2+) is required as a cofactor.

The enzyme catalyses dUTP + H2O = dUMP + diphosphate + H(+). It participates in pyrimidine metabolism; dUMP biosynthesis; dUMP from dCTP (dUTP route): step 2/2. Its function is as follows. This enzyme is involved in nucleotide metabolism: it produces dUMP, the immediate precursor of thymidine nucleotides and it decreases the intracellular concentration of dUTP so that uracil cannot be incorporated into DNA. The sequence is that of Deoxyuridine 5'-triphosphate nucleotidohydrolase from Psychrobacter cryohalolentis (strain ATCC BAA-1226 / DSM 17306 / VKM B-2378 / K5).